The primary structure comprises 300 residues: Tyrosine recombinase XerC (300 aa).

Residues 4–90 enclose the Core-binding (CB) domain; it reads VALSLDVSRF…ALRSFFDWLV (87 aa). The region spanning 111 to 290 is the Tyr recombinase domain; that stretch reads HLPKNIDVDD…DFQHLASVYD (180 aa). Catalysis depends on residues Arg-150, Lys-174, His-242, Arg-245, and His-268. Tyr-277 acts as the O-(3'-phospho-DNA)-tyrosine intermediate in catalysis.

This sequence belongs to the 'phage' integrase family. XerC subfamily. As to quaternary structure, forms a cyclic heterotetrameric complex composed of two molecules of XerC and two molecules of XerD, in which XerC interacts with XerD via its C-terminal region, XerD interacts with XerC via its C-terminal region and so on.

The protein resides in the cytoplasm. Its activity is regulated as follows. FtsK may regulate the catalytic switch between XerC and XerD in the heterotetrameric complex during the two steps of the recombination process. Functionally, site-specific tyrosine recombinase, which acts by catalyzing the cutting and rejoining of the recombining DNA molecules. Binds cooperatively to specific DNA consensus sequences that are separated from XerD binding sites by a short central region, forming the heterotetrameric XerC-XerD complex that recombines DNA substrates. The complex is essential to convert dimers of the bacterial chromosome into monomers to permit their segregation at cell division. It also contributes to the segregational stability of plasmids. In the complex XerC specifically exchanges the top DNA strands. The protein is Tyrosine recombinase XerC of Salmonella typhi.